A 422-amino-acid polypeptide reads, in one-letter code: Histidine--tRNA ligase (422 aa).

It belongs to the class-II aminoacyl-tRNA synthetase family. Homodimer.

It localises to the cytoplasm. The catalysed reaction is tRNA(His) + L-histidine + ATP = L-histidyl-tRNA(His) + AMP + diphosphate + H(+). The sequence is that of Histidine--tRNA ligase from Vibrio cholerae serotype O1 (strain ATCC 39541 / Classical Ogawa 395 / O395).